We begin with the raw amino-acid sequence, 424 residues long: Ubiquitin carboxyl-terminal hydrolase 12/46 homolog (424 aa).

A USP domain is found at 24–421; the sequence is FGLVNFGNTC…TGYILFYQSR (398 aa). The active-site Nucleophile is Cys-33. The segment at 131–189 is disordered; that stretch reads NAGPSNGNPKATNQGGSTSAMASSIASKSSSTSNSNSNSNSTTNSNGNSSNSTGSLNAN. Polar residues predominate over residues 133-144; that stretch reads GPSNGNPKATNQ. Residues 145-189 show a composition bias toward low complexity; it reads GGSTSAMASSIASKSSSTSNSNSNSNSTTNSNGNSSNSTGSLNAN. The active-site Proton acceptor is the His-369.

Belongs to the peptidase C19 family. Catalytic component of the Usp12-46 deubiquitylase complex consisting of Usp12-46, Wdr20 and Uaf1. The Usp12-46 deubiquitylase complex associates with arr/arrow; the interaction leads to deubiquitination and stabilization of arr/arrow.

It carries out the reaction Thiol-dependent hydrolysis of ester, thioester, amide, peptide and isopeptide bonds formed by the C-terminal Gly of ubiquitin (a 76-residue protein attached to proteins as an intracellular targeting signal).. Functionally, catalytic component of the Usp12-46 deubiquitylase complex. Deubiquitylates the wg/wingless-signaling receptor arr/arrow, which stabilizes the receptor and increases its concentration at the cell surface; this enhances the sensitivity of cells to wg/wingless-signal stimulation. This increases the amplitude and spatial range of the signaling response to the wg/wingless morphogen gradient, facilitating the precise, concentration-dependent regulation of its target genes. Required for wg/wingless-mediated signaling in the wing imaginal disc and for wg/wingless-dependent regulation of adult intestinal stem cell proliferation. Negative regulator of Notch signaling, possibly by regulating lysosomal degradation of N/Notch and affecting cell surface receptor levels; this may be context and cell-type specific function involved in external sensory organ development but not in wing imaginal-disc dorsoventral boundary signaling. Protects against HTT/huntingtin-induced polyglutamine expansion-dependent neurodegeneration. The polypeptide is Ubiquitin carboxyl-terminal hydrolase 12/46 homolog (Drosophila melanogaster (Fruit fly)).